Consider the following 344-residue polypeptide: Dihydroorotase (344 aa).

2 residues coordinate Zn(2+): H13 and H15. Substrate contacts are provided by residues 15–17 (HLR) and N41. Zn(2+)-binding residues include K99, H136, and H174. Position 99 is an N6-carboxylysine (K99). H136 is a substrate binding site. L219 lines the substrate pocket. D247 lines the Zn(2+) pocket. D247 is a catalytic residue. Substrate-binding residues include H251 and A263.

The protein belongs to the metallo-dependent hydrolases superfamily. DHOase family. Class II DHOase subfamily. In terms of assembly, homodimer. The cofactor is Zn(2+).

It catalyses the reaction (S)-dihydroorotate + H2O = N-carbamoyl-L-aspartate + H(+). It functions in the pathway pyrimidine metabolism; UMP biosynthesis via de novo pathway; (S)-dihydroorotate from bicarbonate: step 3/3. In terms of biological role, catalyzes the reversible cyclization of carbamoyl aspartate to dihydroorotate. This chain is Dihydroorotase, found in Shewanella denitrificans (strain OS217 / ATCC BAA-1090 / DSM 15013).